The sequence spans 127 residues: Fluoride-specific ion channel FluC (127 aa).

The next 4 helical transmembrane spans lie at 4-24 (SILAIALGAALGALLRWFLGL), 36-56 (GTLLANLVGGYAIGAAIAYFA), 68-88 (LIITGFCGGLTTFSTFSAEVV), and 99-119 (AAGAIATHVGGSLLMTLLGLF). Na(+) contacts are provided by Gly75 and Thr78.

This sequence belongs to the fluoride channel Fluc/FEX (TC 1.A.43) family.

It localises to the cell inner membrane. The catalysed reaction is fluoride(in) = fluoride(out). Na(+) is not transported, but it plays an essential structural role and its presence is essential for fluoride channel function. Fluoride-specific ion channel. Important for reducing fluoride concentration in the cell, thus reducing its toxicity. This chain is Fluoride-specific ion channel FluC, found in Pseudomonas paraeruginosa (strain DSM 24068 / PA7) (Pseudomonas aeruginosa (strain PA7)).